The following is a 212-amino-acid chain: Disintegrin-like halysetin (212 aa).

Residues 4-90 form the Disintegrin domain; sequence PPVCGNELLE…ECPADVFHKN (87 aa). 9 cysteine pairs are disulfide-bonded: Cys7–Cys26, Cys18–Cys36, Cys62–Cys82, Cys69–Cys94, Cys101–Cys106, Cys113–Cys128, Cys151–Cys158, Cys163–Cys174, and Cys200–Cys205. Positions 68 to 70 match the D/ECD-tripeptide motif; the sequence is ECD.

It belongs to the venom metalloproteinase (M12B) family. P-III subfamily. P-IIIb sub-subfamily. In terms of assembly, monomer. As to expression, expressed by the venom gland.

Its subcellular location is the secreted. Inhibits human platelet aggregation stimulated by collagen with an IC(50) of 420 nM. This chain is Disintegrin-like halysetin, found in Gloydius halys (Chinese water mocassin).